Reading from the N-terminus, the 270-residue chain is tRNA pseudouridine synthase A (270 aa).

The active-site Nucleophile is Asp60. Tyr118 provides a ligand contact to substrate.

It belongs to the tRNA pseudouridine synthase TruA family. Homodimer.

The enzyme catalyses uridine(38/39/40) in tRNA = pseudouridine(38/39/40) in tRNA. In terms of biological role, formation of pseudouridine at positions 38, 39 and 40 in the anticodon stem and loop of transfer RNAs. In Salmonella typhimurium (strain LT2 / SGSC1412 / ATCC 700720), this protein is tRNA pseudouridine synthase A.